The chain runs to 437 residues: Na(+)/H(+) antiporter NhaA (437 aa).

Helical transmembrane passes span 29-49 (TAGIILLLSTLLALGLANTAW), 74-94 (LKHWINDGLMTFFFFVIALEL), 111-131 (LPVAAALGGMAAPAGIYLLLV), 139-159 (GWGTVMSTDTAFVIGCLALLG), 168-188 (LFLLSLAIFDDIGAILIVAVG), 196-216 (VALGTGGLGFAFVAGIALLGI), 229-249 (IWLAFDASGVHATLVGVILGL), 307-327 (IALHPWVAFAIMPLFAVSNAG), 341-361 (IAIVVAFVVGKPAGIVLFSFL), 376-396 (WSLLAAGSLLTGIGFTMALFI), and 411-431 (LGVLGASVISAALGFMALTLL).

Belongs to the NhaA Na(+)/H(+) (TC 2.A.33) antiporter family.

The protein resides in the cell inner membrane. It carries out the reaction Na(+)(in) + 2 H(+)(out) = Na(+)(out) + 2 H(+)(in). Its function is as follows. Na(+)/H(+) antiporter that extrudes sodium in exchange for external protons. This Rhizobium meliloti (strain 1021) (Ensifer meliloti) protein is Na(+)/H(+) antiporter NhaA.